Consider the following 34-residue polypeptide: Subtilosin-A (34 aa).

Residues 1 to 34 constitute a cross-link (cyclopeptide (Asn-Gly)); that stretch reads NKGCATCSIGIACLVDGPIPDFECAGATGLGLWG. The segment at residues 7-28 is a cross-link (2-cysteinyl-D-allo-threonine (Cys-Thr)); the sequence is CSIGIACLVDGPIPDFECAGAT. A cross-link (2-cysteinyl-L-phenylalanine (Cys-Phe)) is located at residues 13–22; that stretch reads CLVDGPIPDF.

It belongs to the bacteriocin class V family. In terms of processing, alpha-amino of Asn-1 is covalently linked with the carboxyl of Gly-34 to form a cyclopeptide. Thioether cross-links are formed between cysteines and the alpha-carbons of other amino acids, Cys-7 to Thr-28 and Cys-13 to Phe-22. In forming this cross-link, Thr-28 is converted to D-amino acid.

It is found in the secreted. Its function is as follows. Has bactericidal activity against some Gram-positive bacteria. The polypeptide is Subtilosin-A (Cytobacillus firmus (Bacillus firmus)).